Here is a 362-residue protein sequence, read N- to C-terminus: 3-dehydroquinate synthase (362 aa).

Residues 71–76, 105–109, 129–130, Lys142, and Lys151 each bind NAD(+); these read DGEKYK, GVIGD, and TT. The Zn(2+) site is built by Glu184, His248, and His265.

This sequence belongs to the sugar phosphate cyclases superfamily. Dehydroquinate synthase family. Co(2+) is required as a cofactor. Zn(2+) serves as cofactor. Requires NAD(+) as cofactor.

The protein resides in the cytoplasm. The enzyme catalyses 7-phospho-2-dehydro-3-deoxy-D-arabino-heptonate = 3-dehydroquinate + phosphate. Its pathway is metabolic intermediate biosynthesis; chorismate biosynthesis; chorismate from D-erythrose 4-phosphate and phosphoenolpyruvate: step 2/7. Catalyzes the conversion of 3-deoxy-D-arabino-heptulosonate 7-phosphate (DAHP) to dehydroquinate (DHQ). The polypeptide is 3-dehydroquinate synthase (Hamiltonella defensa subsp. Acyrthosiphon pisum (strain 5AT)).